The sequence spans 491 residues: UDP-N-acetylmuramate--L-alanine ligase (491 aa).

Residue 126–132 participates in ATP binding; the sequence is GTHGKTT.

The protein belongs to the MurCDEF family.

The protein resides in the cytoplasm. The enzyme catalyses UDP-N-acetyl-alpha-D-muramate + L-alanine + ATP = UDP-N-acetyl-alpha-D-muramoyl-L-alanine + ADP + phosphate + H(+). It functions in the pathway cell wall biogenesis; peptidoglycan biosynthesis. In terms of biological role, cell wall formation. The protein is UDP-N-acetylmuramate--L-alanine ligase of Escherichia coli O1:K1 / APEC.